A 346-amino-acid polypeptide reads, in one-letter code: tRNA(Ile)-lysidine synthase (346 aa).

32-37 (SGGPDS) is an ATP binding site.

Belongs to the tRNA(Ile)-lysidine synthase family.

Its subcellular location is the cytoplasm. The enzyme catalyses cytidine(34) in tRNA(Ile2) + L-lysine + ATP = lysidine(34) in tRNA(Ile2) + AMP + diphosphate + H(+). Ligates lysine onto the cytidine present at position 34 of the AUA codon-specific tRNA(Ile) that contains the anticodon CAU, in an ATP-dependent manner. Cytidine is converted to lysidine, thus changing the amino acid specificity of the tRNA from methionine to isoleucine. This is tRNA(Ile)-lysidine synthase from Rhodopseudomonas palustris (strain ATCC BAA-98 / CGA009).